Here is a 267-residue protein sequence, read N- to C-terminus: UPF0173 metal-dependent hydrolase THEYE_A0282 (267 aa).

This sequence belongs to the UPF0173 family.

The protein is UPF0173 metal-dependent hydrolase THEYE_A0282 of Thermodesulfovibrio yellowstonii (strain ATCC 51303 / DSM 11347 / YP87).